Here is an 87-residue protein sequence, read N- to C-terminus: UPF0367 protein P9211_01391 (87 aa).

The protein belongs to the UPF0367 family.

The sequence is that of UPF0367 protein P9211_01391 from Prochlorococcus marinus (strain MIT 9211).